Here is a 449-residue protein sequence, read N- to C-terminus: Trigger factor (449 aa).

Residues 160 to 231 (TDQVTIEELG…VQSVQTKQLQ (72 aa)) enclose the PPIase FKBP-type domain. Positions 411-449 (GQQVAGRQEAGAEQTAQAAEQESGQPQAEGEQAAEQRGE) are disordered. Residues 415-443 (AGRQEAGAEQTAQAAEQESGQPQAEGEQA) are compositionally biased toward low complexity.

This sequence belongs to the FKBP-type PPIase family. Tig subfamily.

The protein localises to the cytoplasm. It carries out the reaction [protein]-peptidylproline (omega=180) = [protein]-peptidylproline (omega=0). Its function is as follows. Involved in protein export. Acts as a chaperone by maintaining the newly synthesized protein in an open conformation. Functions as a peptidyl-prolyl cis-trans isomerase. The polypeptide is Trigger factor (Deinococcus geothermalis (strain DSM 11300 / CIP 105573 / AG-3a)).